We begin with the raw amino-acid sequence, 314 residues long: tRNA pseudouridine synthase B (314 aa).

Residue His43 coordinates substrate. Asp48 (nucleophile) is an active-site residue. Tyr76, Tyr179, and Leu200 together coordinate substrate.

Belongs to the pseudouridine synthase TruB family. Type 1 subfamily.

The enzyme catalyses uridine(55) in tRNA = pseudouridine(55) in tRNA. Functionally, responsible for synthesis of pseudouridine from uracil-55 in the psi GC loop of transfer RNAs. The polypeptide is tRNA pseudouridine synthase B (Shigella dysenteriae serotype 1 (strain Sd197)).